The primary structure comprises 63 residues: Hyphancin-3E (63 aa).

The signal sequence occupies residues 1-22; the sequence is MNFSRILFFVFTCFVALASVSG. Positions 23-26 are cleaved as a propeptide — removed by a dipeptidylpeptidase; the sequence is APEP. Residue Leu-61 is modified to Leucine amide.

This sequence belongs to the cecropin family.

It is found in the secreted. Has antibacterial activity. The protein is Hyphancin-3E of Hyphantria cunea (Fall webworm moth).